The sequence spans 432 residues: 3-oxo-tetronate kinase (432 aa).

ATP contacts are provided by residues histidine 155, serine 272, alanine 324, glycine 344, glutamate 348, 370–373, and glycine 414; that span reads GGET.

This sequence belongs to the four-carbon acid sugar kinase family.

The enzyme catalyses 3-dehydro-L-erythronate + ATP = 3-dehydro-4-O-phospho-L-erythronate + ADP + H(+). It catalyses the reaction 3-dehydro-D-erythronate + ATP = 3-dehydro-4-O-phospho-D-erythronate + ADP + H(+). Its function is as follows. Catalyzes the ATP-dependent phosphorylation of 3-oxo-tetronate to 3-oxo-tetronate 4-phosphate. The polypeptide is 3-oxo-tetronate kinase (Cupriavidus necator (strain ATCC 17699 / DSM 428 / KCTC 22496 / NCIMB 10442 / H16 / Stanier 337) (Ralstonia eutropha)).